The primary structure comprises 2357 residues: Myosin-I heavy chain (2357 aa).

The 676-residue stretch at 13–688 folds into the Myosin motor domain; sequence QPVEDMITLP…QYLKLEELRK (676 aa). 106–113 contributes to the ATP binding site; it reads GESGAGKT. Positions 579–586 are actin-binding; it reads YVRCIKPN. One can recognise an IQ domain in the interval 691-720; the sequence is LLKKVTLIQSVWRMYRCKKRYQQIRASAKI. Positions 787–891 form a coiled coil; the sequence is KRDRNARMLE…QDKNINELDD (105 aa). Residues 787–1076 form a binding to talin A region; that stretch reads KRDRNARMLE…PILGAPPPPP (290 aa). Disordered stretches follow at residues 797 to 852 and 974 to 1112; these read IQRE…EEEL and ASSF…NPQP. 2 stretches are compositionally biased toward low complexity: residues 1003 to 1025 and 1078 to 1106; these read NNNY…SDFS and TSDS…QSTN. The MyTH4 1 domain occupies 1155–1313; that stretch reads YQKSHIKSSL…PSVTELESIK (159 aa). An FERM 1 domain is found at 1318–1620; that stretch reads IFVRITATDG…EYSLYLRNNA (303 aa). One can recognise an SH3 domain in the interval 1618–1678; the sequence is NNAKYARALK…PVDHVEILLS (61 aa). Residues 1686-1849 are disordered; sequence VHPVATLSPP…PSKRLTVSPA (164 aa). Over residues 1706–1733 the composition is skewed to pro residues; the sequence is TPPPPPSISDSMSPPPQVGMLPPPPPPS. Low complexity-rich tracts occupy residues 1734-1746 and 1755-1770; these read VMGS…IPSL and SSNS…SPMM. A compositionally biased stretch (polar residues) spans 1817-1828; the sequence is FRSSLRVSMLNT. In terms of domain architecture, MyTH4 2 spans 1894–2051; the sequence is FNKDPIKESL…PSATEIQSFR (158 aa). An FERM 2 domain is found at 2060–2357; it reads STCKIRFIDQ…ASVYQFYSSQ (298 aa).

It belongs to the TRAFAC class myosin-kinesin ATPase superfamily. Myosin family. In terms of assembly, monomer. Interacts with talA.

It is found in the cytoplasm. Functionally, myosins are actin-based motor molecules with ATPase activity. Involved in the early steps of phagocytosis and adhesion. In Dictyostelium discoideum (Social amoeba), this protein is Myosin-I heavy chain (myoI).